The primary structure comprises 277 residues: MAIVKMKPTSAGRRGMVRVVTEGLHKGAPYAPLLEKKNSTAGRNSNGHITTRHKGGGHKHHYRVVDFKRNKDGIPAKVERIEYDPNRTAFIALLCYADGERRYIIAPRGIQAGAVLVSGAEAAIKVGNTLPIRNIPVGTTIHCIEMKPGKGAQIARSAGASAVLLAKEAAYAQVRLRSGEVRKINVNCRATIGEVGNEEQSLKKIGKAGANRWRGIRPTVRGVVMNPVDHPHGGGEGRTGEAREPVSPWGTPAKGYRTRNNKRTDNMIVRRRYSNKG.

2 disordered regions span residues 37-60 and 223-265; these read KNSTAGRNSNGHITTRHKGGGHKH and VVMN…KRTD. A compositionally biased stretch (polar residues) spans 39-49; the sequence is STAGRNSNGHI. Residues 50-60 show a composition bias toward basic residues; it reads TTRHKGGGHKH. The span at 229-244 shows a compositional bias: basic and acidic residues; the sequence is DHPHGGGEGRTGEARE.

It belongs to the universal ribosomal protein uL2 family. Part of the 50S ribosomal subunit. Forms a bridge to the 30S subunit in the 70S ribosome.

In terms of biological role, one of the primary rRNA binding proteins. Required for association of the 30S and 50S subunits to form the 70S ribosome, for tRNA binding and peptide bond formation. It has been suggested to have peptidyltransferase activity; this is somewhat controversial. Makes several contacts with the 16S rRNA in the 70S ribosome. This chain is Large ribosomal subunit protein uL2, found in Neisseria meningitidis serogroup C (strain 053442).